The chain runs to 874 residues: Alanine--tRNA ligase (874 aa).

Residues His-563, His-567, Cys-665, and His-669 each coordinate Zn(2+).

The protein belongs to the class-II aminoacyl-tRNA synthetase family. It depends on Zn(2+) as a cofactor.

It localises to the cytoplasm. It catalyses the reaction tRNA(Ala) + L-alanine + ATP = L-alanyl-tRNA(Ala) + AMP + diphosphate. Catalyzes the attachment of alanine to tRNA(Ala) in a two-step reaction: alanine is first activated by ATP to form Ala-AMP and then transferred to the acceptor end of tRNA(Ala). Also edits incorrectly charged Ser-tRNA(Ala) and Gly-tRNA(Ala) via its editing domain. This chain is Alanine--tRNA ligase, found in Haemophilus influenzae (strain ATCC 51907 / DSM 11121 / KW20 / Rd).